A 4490-amino-acid chain; its full sequence is MMKLYIDNAAPDKLKGLCIFFVRCRNDVAINVKTIQEEALFTVLDASKGLLNGIRDMLANIFLPAVLATNNWGALNQSKQGESEKHIFTETINRYLSFLDGARISIEGTVKLKTIDNVNFSKLHTFEEVTAAASNSETVHQLEEVLMVWYKQIEQVLIESEQMRKEAGDSGPLTELEHWKRMSAKFNYIIEQIKGPSCKAVINVLNVAHSKLLKNWRDLDARITDTANESKDNVRYLYTLEKVCQPLYNHDLVSMAHGIQNLINAIRMIHGVSRYYNTSERMTSLFIKVTNQMVTACKAYITDGGLNHVWDQETPVVLKKIQDCIFLFKEYQASFHKTRKLISESSGEKSFEVSEMYIFGKFEAFCKRLEKITEMITVVQTYSTLSNSTIEGIDIMAIKFRNIYQGVKKKQYDILDPRRTEFDTDFLDFMTKINGLEVQIQAFMNSSFGKILSSQQALQLLQRFQKLNIPCLGLEINHTIERILQYYVAELDATKKLYHSQKDDPPLARNMPPIAGKILWVRQLYRRISEPINYFFKNSDILSSPDGKAVIRQYNKISYVLVEFEVVYHTAWIREISQLHYALQATLFVRHPETGKLLVNFDPKILEVVRETKCMIKMKLDVPEQAKRLLKLESKLKADKLYLQGLLQYYDELCQEVPSVFVNLMTPKMKKVESVLRQGLTVLTWSSLTLESFFQEVELVLDMFNQLLKKISDLCEMHIDTVLKEIAKTVLISLPESGATKVEDMLTLNETYTKEWADILNHKSKHVEEAVRELISIFEQIYEVKYTGKVGKQSEQRKHVVFGSETGEGENNDYEANIVNEFDTHDKEDEFKKECKEVFAFFSHQLLDSLQKATRLSLDTMKRRIFVASLYGRKQSEDIISFIKSEVHLAIPNVVMIPSLDDIQQAINRMIQLTLEVSRGVAHWGQQQIRPIKSVIPSPTTTDVTHQNTGKLLKKEERSFEEAIPARKLKNFYPGVAEHKDISKLVLLLSSSVNSLRKAAHEALQDFQKYKTLWTEDRDVKVKEFLANNPSLTEIRSEILHYATFEQEIDELKPIIVVGALELHTEPMKLALSIEAKAWKMLLCRYLNEEYKKKMSYMIAFINEYLKKLSRPIRDLDDVRFAMEALSCIRDNEIQMDMTLGPIEEAYAILNRFEVEVTKEESEAVDTLRYSFNKLQSKAVSVQEDLVQVQPKFKSNLLESVEVFREDVINFAEAYELEGPMVPNIPPQEASNRLQIFQASFDDLWRKFVTYSSGEQLFGLPVTDYEVLHKTRKELNLLQKLYGLYDTVMSSISGYYEILWGDVDIEKINAELLEFQNRCRKLPKGLKDWQAFLDLKKRIDDFSESCPLLEMMTNKAMKQRHWDRISELTGTPFDVESDSFCLRNIMEAPLLKHKDDIEDICISAIKEKDIEAKLTQVIENWTNQNLSFAAFKGKGELLLKGTESGEIITLMEDSLMVLGSLLSNRYNAPFKKNIQNWVYKLSTSSDIIEEWLVVQNLWVYLEAVFVGGDIAKQLPQEAKRFQNIDKSWIKIMQRAHENPNVINCCVGDETMGQLLPHLHEQLEVCQKSLTGYLEKKRLLFPRFFFVSDPVLLEILGQASDSHTIQPHLPAVSDNINEVTFHAKDYDRIMAVISREGEKIVLDNSVMAKGPVEIWLLDLLKMQMSSLHNIIRSAFYQISDSGFQLLPFLSHFPAQVGLLGIQMLWTHDSEEALRNAKDDRKIMQVTNQKFLDILNTLISQTTHDLSKFDRVKFETLITIHVHQRDIFDDLVKMHIKSPTDFEWLKQSRFYFKEDLDQTVVSITDVDFIYQNEFLGCTDRLVITPLTDRCYITLAQALGMNMGGAPAGPAGTGKTETTKDMGRCLGKYVVVFNCSDQMDFRGLGRIFKGLAQSGSWGCFDEFNRIELPVLSVAAQQIYIVLTARKERKKQFIFSDGDCVDLNPEFGIFLTMNPGYAGRQELPENLKIQFRTVAMMVPDRQIIMRVKLASCGFLENVILAQKFYVLYKLCEEQLTKQVHYDFGLRNILSVLRTLGSQKRARPEDSELSIVMRGLRDMNLSKLVDEDEPLFLSLINDLFPGLQLDSNTYAELQNAVAHQVQIEGLINHPPWNLKLVQLYETSLVRHGLMTLGPSGSGKTTVITILMKAQTECGRPHREMRMNPKAITAPQMFGRLDTATNDWTDGIFSTLWRKTLKAKKGENIFLILDGPVDAIWIENLNSVLDDNKTLTLANGDRIPMAPSCKLLFEVHNIENASPATVSRMGMVYISSSALSWRPILQAWLKKRTAQEAAVFLTLYEKVFEDTYTYMKLNLNPKMQLLECNYIVQSLNLLEGLIPSKEEGGVSCVEHLHKLFVFGLMWSLGALLELESREKLEAFLRQHESKLDLPEIPKGSNQTMYEFYVTDYGDWEHWNKKLQPYYYPTDSIPEYSSILVPNVDNIRTNFLIDTIAKQHKAVLLTGEQGTAKTVMVKAYLKKYDPEVQLSKSLNFSSATEPMMFQRTIESYVDKRIGSTYGPPGGRKMTVFIDDINMPVINEWGDQITNEIVRQMMEMEGMYSLDKPGDFTTIVDVQLIAAMIHPGGGRNDIPQRLKRQFTVFNCTLPSNASIDKIFGIIGCGYFDPCRSFKPQICEMIVNLVSVGRVLWQWTKVKMLPTPSKFHYIFNLRDLSRIWQGMLTIKAEECASIPTLLSLFKHECSRVIADRFITPEDEQWFNAHLTRAVEENIGSDAASCILPEPYFVDFLREMPEPTGDEPEDSVFEVPKIYELMPSFDFLAEKLQFYQRQFNEIIRGTSLDLVFFKDAMTHLIKISRIIRTSCGNALLVGVGGSGKQSLSRLASFIAGYQIFQITLTRSYNVTNLTDDLKALYKVAGADGKGITFIFTDSEIKDEAFLEYLNNLLSSGEISNLFARDEMDEITQGLISVMKRELPRHPPTFDNLYEYFISRSRKNLHVVLCFSPVGEKFRARSLKFPGLISGCTMDWFSRWPREALIAVASYFLSDYNIVCSSEIKRQVVETMGLFHDMVSESCESYFQRYRRRAHVTPKSYLSFINGYKNIYAEKVKFINEQAERMNIGLDKLMEASESVAKLSQDLAVKEKELAVASIKADEVLAEVTVSAQASAKIKNEVQEVKDKAQKIVDEIDSEKVKAESKLEAAKPALEEAEAALNTIKPNDIATVRKLAKPPHLIMRIMDCVLLLFQKKIDPVTMDPEKSCCKPSWGESLKLMSATGFLWSLQQFPKDTINEETVELLQPYFNMDDYTFESAKKVCGNVAGLLSWTLAMAIFYGINREVLPLKANLAKQEGRLAVANAELGKAQALLDEKQAELDKVQAKFDAAMNEKMDLLNDADTCRKKMQAASTLIDGLSGEKIRWTQQSKEFKAQINRLVGDILLCTGFLSYLGPFNQIFRNYLLKDQWEMELRARKIPFTENLNLISMLVDPPTIGEWGLQGLPGDDLSIQNGIIVTKATRYPLLIDPQTQGKTWIKSKEKENDLQVTSLNHKYFRTHLEDSLSLGRPLLIEDIHEELDPALDNVLEKNFIKSGTTFKVKVGDKECDIMDTFKLYITTKLPNPAFTPEINAKTSVIDFTVTMKGLENQLLRRVILTEKQELEAERVKLLEDVTFNKRKMKELEDNLLYKLSATKGSLVDDESLIGVLRTTKQTAAEVSEKLHVAAETEIKINAAQEEFRPAATRGSILYFLITEMSMVNIMYQTSLAQFLKLFDQSMARSEKSPLPQKRITNIIEYLTYEVFTYSVRGLYENHKFLFVLLMTLKIDLQRGTVKHREFQALIKGGAALDLKACPPKPYRWILDMTWLNLVELSKLPQFAEIMNQISRNEKGWKSWFDKDAPEEEIIPDGYNDSLDTCHKLLLIRSWCPDRTVFQARKYIADSLEEKYTEPVILNLEKTWEESDTRTPLICFLSMGSDPTNQIDALAKKLKLECRTISMGQGQEVHARKLIQMSMQQGGWVLLQNCHLGLEFMEELLETLITTEASDDSFRVWITTEPHDRFPITLLQTSLKFTNEPPQGVRAGLKRTFAGINQDLLDISNLPMWKPMLYTVAFLHSTVQERRKFGPLGWNIPYEFNSADFSASVQFIQNHLDECDIKKGVSWNTVRYMIGEVQYGGRVTDDFDKRLLNCFARVWFSEKMFEPSFCFYTGYKIPLCKTLDQYFEYIQSLPSLDNPEVFGLHPNADITYQSNTASAVLETITNIQPKESGGGVGETREAIVYRLSEDMLSKLPPDYIPHEVKSRLIKMGHLNSMNIFLRQEIDRMQRVISILRSSLSDLKLAIEGTIIMSENLRDALDNMYDARIPQLWKRVSWDSSTLGFWFTELLERNAQFSTWIFEGRPNVFWMTGFFNPQGFLTAMRQEVTRAHKGWALDTVTIHNEVLRQTKEEITSPPGEGVYIYGLYMDGAAWDRRNGKLMESTPKVLFTQLPVLHIFAINSTAPKDPKLYVCPIYKKPRRTDLTFITVVYLRTVLSPDHWILRGVALLCDIK.

A Phosphoserine modification is found at Ser-674. 4 AAA regions span residues 1808–2030 (YQNE…VLRT), 2090–2309 (NAVA…KLNL), 2416–2669 (YYPT…IWQG), and 2780–3034 (QFNE…YRRR). ATP contacts are provided by residues 1846 to 1853 (GPAGTGKT) and 2128 to 2135 (GPSGSGKT). Positions 3049 to 3346 (YKNIYAEKVK…MDLLNDADTC (298 aa)) are stalk. 3 coiled-coil regions span residues 3072-3164 (DKLM…ALNT), 3290-3354 (LKAN…QAAS), and 3594-3630 (RRVI…DNLL). AAA regions lie at residues 3432-3662 (LVDP…EVSE) and 3877-4091 (ARKY…FIQN).

It belongs to the dynein heavy chain family. In terms of assembly, consists of at least two heavy chains and a number of intermediate and light chains. Expressed in spermatozoa (at protein level). Not detected in airway epithelial cells (at protein level).

It localises to the cytoplasm. The protein resides in the cytoskeleton. The protein localises to the flagellum axoneme. Force generating protein component of the outer dynein arms (ODAs) in the sperm flagellum. Produces force towards the minus ends of microtubules. Dynein has ATPase activity; the force-producing power stroke is thought to occur on release of ADP. Involved in sperm motility; implicated in sperm flagellar assembly. The chain is Dynein axonemal heavy chain 8 from Homo sapiens (Human).